The primary structure comprises 167 residues: Large ribosomal subunit protein uL10 (167 aa).

Belongs to the universal ribosomal protein uL10 family. In terms of assembly, part of the ribosomal stalk of the 50S ribosomal subunit. The N-terminus interacts with L11 and the large rRNA to form the base of the stalk. The C-terminus forms an elongated spine to which L12 dimers bind in a sequential fashion forming a multimeric L10(L12)X complex.

In terms of biological role, forms part of the ribosomal stalk, playing a central role in the interaction of the ribosome with GTP-bound translation factors. This Paraburkholderia phytofirmans (strain DSM 17436 / LMG 22146 / PsJN) (Burkholderia phytofirmans) protein is Large ribosomal subunit protein uL10.